Reading from the N-terminus, the 474-residue chain is CUGBP Elav-like family member 4 (474 aa).

The segment at Met-1–Gln-287 is sufficient for RNA-binding and MSE-dependent splicing activity. Polar residues predominate over residues Leu-18–Gly-28. Positions Leu-18–Gly-41 are disordered. RRM domains follow at residues Ile-54–Ser-135 and Arg-141–Thr-221. Residues Arg-228–Phe-247 form a necessary for TNNT2 exon 5 inclusion region. Residues Pro-392–Pro-467 form the RRM 3 domain.

Belongs to the CELF/BRUNOL family.

Its subcellular location is the nucleus. The protein resides in the cytoplasm. Functionally, RNA-binding protein implicated in the regulation of pre-mRNA alternative splicing. Mediates exon inclusion and/or exclusion in pre-mRNA that are subject to tissue-specific and developmentally regulated alternative splicing. Specifically activates exon 5 inclusion of cardiac isoforms of TNNT2 during heart remodeling at the juvenile to adult transition. Promotes exclusion of both the smooth muscle (SM) and non-muscle (NM) exons in actinin pre-mRNAs. Activates the splicing of MAPT/Tau exon 10. Binds to muscle-specific splicing enhancer (MSE) intronic sites flanking the alternative exon 5 of TNNT2 pre-mRNA. The sequence is that of CUGBP Elav-like family member 4 (CELF4) from Macaca fascicularis (Crab-eating macaque).